The chain runs to 1150 residues: Solute carrier family 12 member 6 (1150 aa).

Over 1–135 (MHPPETTTKM…DEYFDKNLAL (135 aa)) the chain is Cytoplasmic. The tract at residues 20–66 (TKIDDIPGLSDTSPDLSSRSSSRVRFSSRESVPETSRSEPMSEMSGA) is disordered. Residues 28 to 45 (LSDTSPDLSSRSSSRVRF) are compositionally biased toward low complexity. A phosphoserine mark is found at Ser-32 and Ser-120. The discontinuously helical transmembrane segment at 136–158 (FEEEMDTRPKVSSLLNRMANYTN) threads the bilayer. K(+) contacts are provided by Ser-147 and Ser-148. The residue at position 148 (Ser-148) is a Phosphoserine. A chloride-binding site is contributed by Asn-151. Residues 159-165 (LTQGAKE) are Extracellular-facing. The disordered stretch occupies residues 161-181 (QGAKEHEEAENITEGKKKPTK). Basic and acidic residues predominate over residues 163–177 (AKEHEEAENITEGKK). A helical membrane pass occupies residues 166–188 (HEEAENITEGKKKPTKTPQMGTF). Residues 189–211 (MGVYLPCLQNIFGVILFLRLTWV) lie on the Cytoplasmic side of the membrane. Residues 212 to 245 (VGTAGVLQAFAIVLICCCCTMLTAISMSAIATNG) traverse the membrane as a helical segment. Residues 246–263 (VVPAGGSYFMISRALGPE) are Extracellular-facing. Transmembrane regions (helical) follow at residues 264–287 (FGGA…ILGA) and 288–316 (IEIF…AMLN). The Extracellular portion of the chain corresponds to 317–433 (NMRVYGTAFL…FVHNNVTSIQ (117 aa)). A disulfide bridge connects residues Cys-375 and Cys-390. N-linked (GlcNAc...) asparagine glycosylation is found at Asn-379, Asn-398, Asn-411, and Asn-428. Cys-410 and Cys-420 form a disulfide bridge. The chain crosses the membrane as a helical span at residues 434–454 (GIPGLASGIITENLWSNYLPK). K(+) contacts are provided by Ile-443, Thr-444, and Asn-446. Ile-443 and Thr-444 together coordinate chloride. Positions 447 and 448 each coordinate chloride. Residues 455–464 (GEIIEKPSAK) lie on the Cytoplasmic side of the membrane. Residues 465–487 (SSDVLGSLNHEYVLVDITTSFTL) form a helical membrane-spanning segment. Topologically, residues 488–518 (LVGIFFPSVTGIMAGSNRSGDLKDAQKSIPI) are extracellular. Residues 519–545 (GTILAILTTSFVYLSNVVLFGACIEGV) form a helical membrane-spanning segment. Residues 546–568 (VLRDKFGDAVKGNLVVGTLSWPS) are Cytoplasmic-facing. A run of 2 helical transmembrane segments spans residues 569-589 (PWVI…QSLT) and 590-612 (GAPR…VFGH). Ile-603 provides a ligand contact to chloride. Topologically, residues 613–629 (SKANGEPTWALLLTAAI) are cytoplasmic. Helical transmembrane passes span 630-649 (AELG…LSMF) and 650-665 (FLMC…ALQT). Residues 666–1150 (LLRTPNWRPR…GGSEVITIYS (485 aa)) are Cytoplasmic-facing. The scissor helix stretch occupies residues 682-691 (ALSFMGMSIC). Phosphoserine is present on Ser-736. A Phosphothreonine modification is found at Thr-778. The residue at position 981 (Ser-981) is a Phosphoserine. The residue at position 991 (Thr-991) is a Phosphothreonine; by OXSR1 and STK39. 3 positions are modified to phosphoserine: Ser-1023, Ser-1029, and Ser-1032. Thr-1048 is modified (phosphothreonine; by OXSR1 and STK39). Tyr-1121 bears the Phosphotyrosine mark. The interaction with CKB stretch occupies residues 1133–1150 (ERVLLVRGGGSEVITIYS).

Belongs to the SLC12A transporter family. K/Cl co-transporter subfamily. As to quaternary structure, homodimer; adopts a domain-swap conformation at the scissor helices connecting the transmembrane domain and C-terminal domain. Heterodimer with K-Cl cotransporter SLC12A5. Interacts (via C-terminus) with CKB; the interaction may be required for potassium-chloride cotransport activity. Phosphorylated, phosphorylation regulates transporter activity. Phosphorylated at Thr-991 and Thr-1048 by OXSR1/OSR1 and STK39/SPAK downstream of WNK kinases (WNK1, WNK2, WNK3 or WNK4), inhibiting the potassium-chloride cotransport activity. Post-translationally, N-glycosylated. As to expression, expressed in brain (at protein level). Highly expressed in heart, brain and kidney. Detected at lower levels in skeletal muscle, placenta, lung and pancreas. Detected in umbilical vein endothelial cells. More abundant in kidney. In terms of tissue distribution, testis specific.

The protein resides in the cell membrane. It is found in the basolateral cell membrane. The enzyme catalyses K(+)(in) + chloride(in) = K(+)(out) + chloride(out). With respect to regulation, inhibited following phosphorylation by OXSR1/OSR1 and STK39/SPAK: phosphorylation takes place downstream of WNK kinases (WNK1, WNK2, WNK3 or WNK4) in response to hyperosmotic stress and subsequent cell shrinkage. Activated by N-ethylmaleimide (NEM). Inhibited by DIOA, bumetanide and furosemide. In terms of biological role, mediates electroneutral potassium-chloride cotransport when activated by cell swelling. May contribute to cell volume homeostasis in single cells. Functionally, mediates electroneutral potassium-chloride cotransport when activated by cell swelling. May contribute to cell volume homeostasis in single cells. Mediates electroneutral potassium-chloride cotransport when activated by cell swelling. May contribute to cell volume homeostasis in single cells. The protein is Solute carrier family 12 member 6 of Homo sapiens (Human).